Here is a 542-residue protein sequence, read N- to C-terminus: Sensory neuron membrane protein 2 (542 aa).

Residues 1 to 487 (MMVMNTELRQ…MKVLTLLDIV (487 aa)) lie on the Extracellular side of the membrane. Asn33, Asn128, Asn238, and Asn274 each carry an N-linked (GlcNAc...) asparagine glycan. 3 disulfide bridges follow: Cys283-Cys351, Cys312-Cys378, and Cys353-Cys367. A helical membrane pass occupies residues 488–508 (QWVMIGSGLLLAIIMPIVYFI). The Cytoplasmic portion of the chain corresponds to 509 to 542 (KRRPSSGSITPTLTTTTSTVSISDGGGLGGNPQK).

The protein belongs to the CD36 family. As to expression, detected in the antenna, legs and wings. Higher levels of expression detected in male compared to female.

It localises to the cell membrane. In terms of biological role, plays an olfactory role that is not restricted to pheromone sensitivity. This Aedes aegypti (Yellowfever mosquito) protein is Sensory neuron membrane protein 2.